Consider the following 303-residue polypeptide: E3 ubiquitin-protein ligase CCNB1IP1 homolog (303 aa).

The RING-type; degenerate zinc finger occupies 3 to 42 (CNACWRELEGQAVSTTCGHLLCTEDAKKILSNDAACPICD). Positions 119-184 (LEEVHTAYQK…YESAKRSAIQ (66 aa)) form a coiled coil. A disordered region spans residues 201-268 (VPNIMDSSDP…DIRPRQPARP (68 aa)).

Interacts with ZIP4 and PTD. Expressed in young panicles.

It localises to the nucleus. The protein resides in the chromosome. The catalysed reaction is S-ubiquitinyl-[E2 ubiquitin-conjugating enzyme]-L-cysteine + [acceptor protein]-L-lysine = [E2 ubiquitin-conjugating enzyme]-L-cysteine + N(6)-ubiquitinyl-[acceptor protein]-L-lysine.. The protein operates within protein modification; protein ubiquitination. Its function is as follows. Ubiquitin E3 ligase required for class I crossover (CO) formation during meiosis. In Oryza sativa subsp. japonica (Rice), this protein is E3 ubiquitin-protein ligase CCNB1IP1 homolog.